Consider the following 723-residue polypeptide: BTB/POZ domain-containing protein 18 (723 aa).

The BTB domain maps to 34–102 (CDALLQAEGE…LYTSEMEVSQ (69 aa)). Disordered stretches follow at residues 150-176 (APIS…PSPL), 188-350 (EGAH…EEGQ), and 370-394 (EPPL…PSGT). 2 stretches are compositionally biased toward polar residues: residues 162 to 174 (RPQT…QTPS) and 195 to 205 (NLPNADSLSDT). Low complexity-rich tracts occupy residues 217–227 (QESRSSPSSQR) and 271–286 (TSTP…SMPT). Basic and acidic residues-rich tracts occupy residues 303-312 (QGVDKQKPGE) and 327-336 (KPAENKKQSP). Ser414 bears the Phosphoserine mark. The interval 603–637 (TPDLEITSSQPLDGQGEKLLHFDSSDPSQRSYNHL) is disordered. A compositionally biased stretch (basic and acidic residues) spans 617-626 (QGEKLLHFDS). Polar residues predominate over residues 627–636 (SDPSQRSYNH). Ser682 and Ser683 each carry phosphoserine. A disordered region spans residues 699–723 (LGPTSVPSVWPDPSSESETEVDILT). A compositionally biased stretch (acidic residues) spans 713–723 (SESETEVDILT).

In terms of tissue distribution, expressed in testis.

The protein resides in the nucleus. In terms of biological role, specifically required during spermatogenesis to promote expression of piRNA precursors. The piRNA metabolic process mediates the repression of transposable elements during meiosis by forming complexes composed of piRNAs and Piwi proteins and governs the methylation and subsequent repression of transposons, which is essential for the germline integrity. Acts by facilitating transcription elongation at piRNA loci during pachytene. The chain is BTB/POZ domain-containing protein 18 from Mus musculus (Mouse).